Consider the following 155-residue polypeptide: Ribosomal RNA large subunit methyltransferase H (155 aa).

2 residues coordinate S-adenosyl-L-methionine: L72 and G104.

It belongs to the RNA methyltransferase RlmH family. In terms of assembly, homodimer.

The protein resides in the cytoplasm. The catalysed reaction is pseudouridine(1915) in 23S rRNA + S-adenosyl-L-methionine = N(3)-methylpseudouridine(1915) in 23S rRNA + S-adenosyl-L-homocysteine + H(+). Specifically methylates the pseudouridine at position 1915 (m3Psi1915) in 23S rRNA. The protein is Ribosomal RNA large subunit methyltransferase H of Fusobacterium nucleatum subsp. nucleatum (strain ATCC 25586 / DSM 15643 / BCRC 10681 / CIP 101130 / JCM 8532 / KCTC 2640 / LMG 13131 / VPI 4355).